Reading from the N-terminus, the 205-residue chain is Large ribosomal subunit protein bL9 (205 aa).

Positions 160-205 are disordered; that stretch reads RDRKSRNAAAASEVQDAPVEDGGDEVVSVDSVAAEDGGADASGGTA. Residues 184 to 195 are compositionally biased toward low complexity; it reads EVVSVDSVAAED.

It belongs to the bacterial ribosomal protein bL9 family.

Functionally, binds to the 23S rRNA. The protein is Large ribosomal subunit protein bL9 of Anaplasma phagocytophilum (strain HZ).